Consider the following 498-residue polypeptide: MKKVSTLDLLFVAIMGVSPAAFAADLIDVSKLPSKAAQGAPGPVTLQAAVGAGGADELKAIRSTTLPNGKQVTRYEQFHNGVRVVGEAITEVKGPGKSVAARRSGHFVANIAADLPGSTTAAVSAEQVLAQAKSLKAQGRKTENDKVELVIRLGENNIAQLVYNVSYLIPGEGLSRPHFVIDAKTGEVLDQWEGLAHAEAGGPGGNQKIGKYTYGSDYGPLIVNDRCEMDDGNVITVDMNGSTNDSKTTPFRFACPTNTYKQVNGAYSPLNDAHFFGGVVFNLYRDWFGTSPLTHKLYMKVHYGRSVENAYWDGTAMLFGDGATMFYPLVSLDVAAHEVSHGFTEQNSGLIYRGQSGGMNEAFSDMAGEAAEFYMRGKNDFLIGYDIKKGSGALRYMDQPSRDGRSIDNASQYYNGIDVHHSSGVYNRAFYLLANSPGWDTRKAFEVFVDANRYYWTATSNYNSGACGVISSAQNRNYSAADVTRAFSTVGVTCPSAL.

The N-terminal stretch at 1–23 is a signal peptide; that stretch reads MKKVSTLDLLFVAIMGVSPAAFA. Positions 24–197 are excised as a propeptide; that stretch reads ADLIDVSKLP…VLDQWEGLAH (174 aa). Cysteines 227 and 255 form a disulfide. At Thr-236 the chain carries Phosphothreonine. Asp-333 is a binding site for Ca(2+). Residue His-337 participates in Zn(2+) binding. Glu-338 is an active-site residue. Positions 341 and 361 each coordinate Zn(2+). The Ca(2+) site is built by Glu-369, Glu-372, Asp-380, and Leu-382. The Proton donor role is filled by His-420. A disulfide bridge connects residues Cys-467 and Cys-494.

Belongs to the peptidase M4 family. Ca(2+) serves as cofactor. The cofactor is Zn(2+). In terms of processing, made as a pre-pro-protein which is exported to the periplasm. Probably autocatalyzes cleavage of its pro-peptide. The pro-peptide can be secreted with mature elastase.

It is found in the secreted. The enzyme catalyses Hydrolysis of proteins including elastin, collagen types III and IV, fibronectin and immunoglobulin A, generally with bulky hydrophobic group at P1'. Insulin B chain cleavage pattern identical to that of thermolysin, but specificity differs in other respects.. Cleaves host elastase, collagen, IgI and several complement components as well as endogenous pro-aminopeptidase, pro-chitin-binding protein (cbpD). Cleaves its own pro-peptide. Involved in the pathogenesis of P.aeruginosa infections. In Pseudomonas aeruginosa (strain UCBPP-PA14), this protein is Elastase (lasB).